The chain runs to 338 residues: tRNA N6-adenosine threonylcarbamoyltransferase (338 aa).

Residues H111 and H115 each contribute to the Fe cation site. Residues 134-138, D167, G180, and N272 contribute to the substrate site; that span reads LVSGG. D300 contacts Fe cation.

The protein belongs to the KAE1 / TsaD family. It depends on Fe(2+) as a cofactor.

The protein localises to the cytoplasm. The enzyme catalyses L-threonylcarbamoyladenylate + adenosine(37) in tRNA = N(6)-L-threonylcarbamoyladenosine(37) in tRNA + AMP + H(+). In terms of biological role, required for the formation of a threonylcarbamoyl group on adenosine at position 37 (t(6)A37) in tRNAs that read codons beginning with adenine. Is involved in the transfer of the threonylcarbamoyl moiety of threonylcarbamoyl-AMP (TC-AMP) to the N6 group of A37, together with TsaE and TsaB. TsaD likely plays a direct catalytic role in this reaction. The chain is tRNA N6-adenosine threonylcarbamoyltransferase from Shewanella baltica (strain OS223).